We begin with the raw amino-acid sequence, 557 residues long: Probable asparagine synthetase [glutamine-hydrolyzing] (557 aa).

C2 serves as the catalytic For GATase activity. A Glutamine amidotransferase type-2 domain is found at 2–188 (CGILAILNSL…PGHYFSSKTK (187 aa)). Residues 50–54 (RLAIV), 75–77 (NGE), and D101 each bind L-glutamine. The 250-residue stretch at 217–466 (AIKEAFEQAV…LPSSVLWRQK (250 aa)) folds into the Asparagine synthetase domain. Residues L239, I279, and 353-354 (SG) contribute to the ATP site. The tract at residues 538–557 (WGASQDPSGRAQKVHLSTTE) is disordered.

It catalyses the reaction L-aspartate + L-glutamine + ATP + H2O = L-asparagine + L-glutamate + AMP + diphosphate + H(+). Its pathway is amino-acid biosynthesis; L-asparagine biosynthesis; L-asparagine from L-aspartate (L-Gln route): step 1/1. The protein is Probable asparagine synthetase [glutamine-hydrolyzing] (asns) of Dictyostelium discoideum (Social amoeba).